A 489-amino-acid chain; its full sequence is Rhamnulokinase (489 aa).

13–17 (ASSGR) serves as a coordination point for ATP. C68 and C222 are joined by a disulfide. Residues G83 and 236-238 (HDT) contribute to the substrate site. The Proton acceptor role is filled by D237. T259 contacts ATP. Position 296 (N296) interacts with substrate. Q304 is a binding site for ATP. A disulfide bond links C353 and C370. G402 contributes to the ATP binding site. C413 and C417 are joined by a disulfide.

This sequence belongs to the rhamnulokinase family. It depends on Mg(2+) as a cofactor.

The enzyme catalyses L-rhamnulose + ATP = L-rhamnulose 1-phosphate + ADP + H(+). It functions in the pathway carbohydrate degradation; L-rhamnose degradation; glycerone phosphate from L-rhamnose: step 2/3. Its function is as follows. Involved in the catabolism of L-rhamnose (6-deoxy-L-mannose). Catalyzes the transfer of the gamma-phosphate group from ATP to the 1-hydroxyl group of L-rhamnulose to yield L-rhamnulose 1-phosphate. This is Rhamnulokinase from Salmonella paratyphi B (strain ATCC BAA-1250 / SPB7).